Consider the following 151-residue polypeptide: Cytochrome c-type biogenesis protein CcmE (151 aa).

The Cytoplasmic segment spans residues 1–8; the sequence is MNPQRKKR. Residues 9–29 form a helical; Signal-anchor for type II membrane protein membrane-spanning segment; the sequence is LFLILGLLAGVAVAVGFALSA. The Periplasmic portion of the chain corresponds to 30–151; the sequence is LQQNINLFYT…QAASGAEAKP (122 aa). Heme-binding residues include His124 and Tyr128.

Belongs to the CcmE/CycJ family.

It is found in the cell inner membrane. Heme chaperone required for the biogenesis of c-type cytochromes. Transiently binds heme delivered by CcmC and transfers the heme to apo-cytochromes in a process facilitated by CcmF and CcmH. The polypeptide is Cytochrome c-type biogenesis protein CcmE (Pseudomonas putida (strain W619)).